A 1067-amino-acid chain; its full sequence is Carbamoyl phosphate synthase large chain (1067 aa).

Positions 1–401 (MPLNKDIKKV…AFLKGIRSLE (401 aa)) are carboxyphosphate synthetic domain. Residues Arg-129, Arg-169, Gly-175, Gly-176, Lys-208, Val-210, Glu-215, Gly-241, Ile-242, His-243, Gln-284, and Glu-298 each coordinate ATP. Residues 133–327 (RDMMNRINQP…IAKVAAKIAL (195 aa)) form the ATP-grasp 1 domain. Mg(2+)-binding residues include Gln-284, Glu-298, and Asn-300. Gln-284, Glu-298, and Asn-300 together coordinate Mn(2+). Residues 402–549 (IGKYSLEHKK…YSTYEQYDEV (148 aa)) are oligomerization domain. The interval 550 to 932 (VVSDNKKVVV…ALYKGFVGAS (383 aa)) is carbamoyl phosphate synthetic domain. One can recognise an ATP-grasp 2 domain in the interval 674 to 864 (DDLLERLNIA…IVDIATRIML (191 aa)). ATP contacts are provided by Arg-710, Lys-749, Leu-751, Glu-755, Gly-780, Val-781, His-782, Ser-783, Gln-823, and Glu-835. Mg(2+) contacts are provided by Gln-823, Glu-835, and Asn-837. Mn(2+) contacts are provided by Gln-823, Glu-835, and Asn-837. The MGS-like domain occupies 933–1067 (MYTGDKGKTI…NRELEVFNLI (135 aa)). An allosteric domain region spans residues 933–1067 (MYTGDKGKTI…NRELEVFNLI (135 aa)).

Belongs to the CarB family. Composed of two chains; the small (or glutamine) chain promotes the hydrolysis of glutamine to ammonia, which is used by the large (or ammonia) chain to synthesize carbamoyl phosphate. Tetramer of heterodimers (alpha,beta)4. It depends on Mg(2+) as a cofactor. Mn(2+) is required as a cofactor.

The enzyme catalyses hydrogencarbonate + L-glutamine + 2 ATP + H2O = carbamoyl phosphate + L-glutamate + 2 ADP + phosphate + 2 H(+). It carries out the reaction hydrogencarbonate + NH4(+) + 2 ATP = carbamoyl phosphate + 2 ADP + phosphate + 2 H(+). It functions in the pathway amino-acid biosynthesis; L-arginine biosynthesis; carbamoyl phosphate from bicarbonate: step 1/1. It participates in pyrimidine metabolism; UMP biosynthesis via de novo pathway; (S)-dihydroorotate from bicarbonate: step 1/3. In terms of biological role, large subunit of the glutamine-dependent carbamoyl phosphate synthetase (CPSase). CPSase catalyzes the formation of carbamoyl phosphate from the ammonia moiety of glutamine, carbonate, and phosphate donated by ATP, constituting the first step of 2 biosynthetic pathways, one leading to arginine and/or urea and the other to pyrimidine nucleotides. The large subunit (synthetase) binds the substrates ammonia (free or transferred from glutamine from the small subunit), hydrogencarbonate and ATP and carries out an ATP-coupled ligase reaction, activating hydrogencarbonate by forming carboxy phosphate which reacts with ammonia to form carbamoyl phosphate. This is Carbamoyl phosphate synthase large chain from Clostridium perfringens (strain SM101 / Type A).